A 260-amino-acid chain; its full sequence is 3'-5' ssDNA/RNA exonuclease TatD (260 aa).

A divalent metal cation contacts are provided by glutamate 92, histidine 128, and histidine 153.

Belongs to the metallo-dependent hydrolases superfamily. TatD-type hydrolase family. TatD subfamily. As to quaternary structure, monomer. Mg(2+) serves as cofactor.

The protein resides in the cytoplasm. In terms of biological role, 3'-5' exonuclease that prefers single-stranded DNA and RNA. May play a role in the H(2)O(2)-induced DNA damage repair. The polypeptide is 3'-5' ssDNA/RNA exonuclease TatD (Edwardsiella piscicida).